A 223-amino-acid polypeptide reads, in one-letter code: Protein BTG4 (223 aa).

It belongs to the BTG family. As to quaternary structure, interacts with CNOT7. Interacts with EIF4E. Interacts with CNOT8. As to expression, expressed in oocytes after germinal vesicle breakdown. Expressed in testis and in olfactory epithelium.

In terms of biological role, adapter protein that bridges CNOT7, a catalytic subunit of the CCR4-NOT complex, to EIF4E. Facilitates maternal mRNAs decay during the maturation of oocytes and in the fertilized egg, and is required for the maternal-zygotic transition (MZT), zygotic cleavage and initiation of embryonic development. The polypeptide is Protein BTG4 (BTG4) (Homo sapiens (Human)).